The chain runs to 148 residues: UPF0735 ACT domain-containing protein Dred_1164 (148 aa).

In terms of domain architecture, ACT spans 72 to 147 (TLALLMEHQP…GVREVRLVGQ (76 aa)).

Belongs to the UPF0735 family.

This Desulforamulus reducens (strain ATCC BAA-1160 / DSM 100696 / MI-1) (Desulfotomaculum reducens) protein is UPF0735 ACT domain-containing protein Dred_1164.